A 195-amino-acid chain; its full sequence is Nicotinamide riboside kinase 2 (195 aa).

Position 9 to 17 (9 to 17) interacts with ATP; sequence GVTNGGKTT. The Mg(2+) site is built by Thr-16 and Asp-35. Residue Asp-35 is the Proton acceptor of the active site. Residues 35-38 and 54-55 each bind substrate; these read DDFF and WD. Arg-130 is an ATP binding site. Residues Arg-131 and 136-137 contribute to the substrate site; that span reads YM. ATP-binding positions include 134–136 and 174–176; these read RTY and KSP.

The protein belongs to the uridine kinase family. NRK subfamily. In terms of assembly, monomer. Interacts with ITGB1 alone or when associated with alpha-7, but not with alpha-5. Expressed in skeletal muscle (at protein level).

The catalysed reaction is beta-nicotinamide D-riboside + ATP = beta-nicotinamide D-ribonucleotide + ADP + H(+). It carries out the reaction beta-D-ribosylnicotinate + ATP = nicotinate beta-D-ribonucleotide + ADP + H(+). Its pathway is cofactor biosynthesis; NAD(+) biosynthesis. Functionally, catalyzes the phosphorylation of nicotinamide riboside (NR) and nicotinic acid riboside (NaR) to form nicotinamide mononucleotide (NMN) and nicotinic acid mononucleotide (NaMN). Reduces laminin matrix deposition and cell adhesion to laminin, but not to fibronectin. Involved in the regulation of PXN at the protein level and of PXN tyrosine phosphorylation. May play a role in the regulation of terminal myogenesis. This Mus musculus (Mouse) protein is Nicotinamide riboside kinase 2 (Nmrk2).